Consider the following 108-residue polypeptide: Holo-[acyl-carrier-protein] synthase (108 aa).

Residues Asp-9 and Glu-54 each coordinate Mg(2+).

It belongs to the P-Pant transferase superfamily. AcpS family. Mg(2+) is required as a cofactor.

Its subcellular location is the cytoplasm. The catalysed reaction is apo-[ACP] + CoA = holo-[ACP] + adenosine 3',5'-bisphosphate + H(+). Transfers the 4'-phosphopantetheine moiety from coenzyme A to a Ser of acyl-carrier-protein. This is Holo-[acyl-carrier-protein] synthase from Mycoplasmopsis pulmonis (strain UAB CTIP) (Mycoplasma pulmonis).